A 187-amino-acid polypeptide reads, in one-letter code: Protein GrpE (187 aa).

Positions 1 to 11 (MTDSSNEHETE) are enriched in basic and acidic residues. The interval 1–23 (MTDSSNEHETENPSVPNPDNEIQ) is disordered.

This sequence belongs to the GrpE family. As to quaternary structure, homodimer.

The protein resides in the cytoplasm. Its function is as follows. Participates actively in the response to hyperosmotic and heat shock by preventing the aggregation of stress-denatured proteins, in association with DnaK and GrpE. It is the nucleotide exchange factor for DnaK and may function as a thermosensor. Unfolded proteins bind initially to DnaJ; upon interaction with the DnaJ-bound protein, DnaK hydrolyzes its bound ATP, resulting in the formation of a stable complex. GrpE releases ADP from DnaK; ATP binding to DnaK triggers the release of the substrate protein, thus completing the reaction cycle. Several rounds of ATP-dependent interactions between DnaJ, DnaK and GrpE are required for fully efficient folding. The polypeptide is Protein GrpE (Chlamydia felis (strain Fe/C-56) (Chlamydophila felis)).